Here is a 33-residue protein sequence, read N- to C-terminus: Glucagon-2 (33 aa).

This sequence belongs to the glucagon family.

The protein localises to the secreted. Promotes hydrolysis of glycogen and lipids, and raises the blood sugar level. The polypeptide is Glucagon-2 (gcg2) (Oreochromis niloticus (Nile tilapia)).